The chain runs to 89 residues: Small ribosomal subunit protein uS15 (89 aa).

This sequence belongs to the universal ribosomal protein uS15 family. In terms of assembly, part of the 30S ribosomal subunit. Forms a bridge to the 50S subunit in the 70S ribosome, contacting the 23S rRNA.

Functionally, one of the primary rRNA binding proteins, it binds directly to 16S rRNA where it helps nucleate assembly of the platform of the 30S subunit by binding and bridging several RNA helices of the 16S rRNA. Its function is as follows. Forms an intersubunit bridge (bridge B4) with the 23S rRNA of the 50S subunit in the ribosome. The chain is Small ribosomal subunit protein uS15 from Leuconostoc mesenteroides subsp. mesenteroides (strain ATCC 8293 / DSM 20343 / BCRC 11652 / CCM 1803 / JCM 6124 / NCDO 523 / NBRC 100496 / NCIMB 8023 / NCTC 12954 / NRRL B-1118 / 37Y).